The following is a 291-amino-acid chain: uncharacterized protein (291 aa).

This is an uncharacterized protein from Haemophilus influenzae (strain ATCC 51907 / DSM 11121 / KW20 / Rd).